Consider the following 315-residue polypeptide: Protoheme IX farnesyltransferase 1 (315 aa).

9 consecutive transmembrane segments (helical) span residues 25–45 (PGII…AAKG), 49–69 (LALM…GCAV), 87–107 (RVTV…LALG), 120–139 (ALAL…VYSL), 145–165 (SVYG…VGYC), 176–196 (AILL…IAIF), 220–240 (LHIV…PLAG), 242–262 (TGIA…AMAL), and 280–300 (GFSI…SQVI).

It belongs to the UbiA prenyltransferase family. Protoheme IX farnesyltransferase subfamily.

The protein resides in the cell inner membrane. It carries out the reaction heme b + (2E,6E)-farnesyl diphosphate + H2O = Fe(II)-heme o + diphosphate. The protein operates within porphyrin-containing compound metabolism; heme O biosynthesis; heme O from protoheme: step 1/1. Converts heme B (protoheme IX) to heme O by substitution of the vinyl group on carbon 2 of heme B porphyrin ring with a hydroxyethyl farnesyl side group. The protein is Protoheme IX farnesyltransferase 1 of Shewanella sp. (strain W3-18-1).